The following is a 540-amino-acid chain: uncharacterized protein (540 aa).

At 1–61 the chain is on the cytoplasmic side; that stretch reads MFSIFKKKTS…TNDSPWQDPT (61 aa). The helical transmembrane segment at 62 to 82 threads the bilayer; the sequence is YFSSFGKELMFIATCMLAQLL. The Extracellular segment spans residues 83–108; sequence NQAGQTHALCIMNVLSKSFNSEANNQ. The chain crosses the membrane as a helical span at residues 109-129; the sequence is AWLMASFPLAAGSFILISGRL. Residues 130–131 lie on the Cytoplasmic side of the membrane; it reads GD. Residues 132–152 traverse the membrane as a helical segment; that stretch reads IYGLKKMLIVGYVIVIVWSII. The Extracellular segment spans residues 153 to 169; the sequence is SGLSKYSNSDAFFITSR. The chain crosses the membrane as a helical span at residues 170-190; that stretch reads AFQGVGIAFILPNIMGLVGHV. Residues 191–203 lie on the Cytoplasmic side of the membrane; sequence YKVGSFRKNIVIS. Residues 204–224 traverse the membrane as a helical segment; sequence FIGACAPTGGMFGGLFGGLIV. Residues 225–232 lie on the Extracellular side of the membrane; the sequence is TEDPNQWP. Residues 233-253 form a helical membrane-spanning segment; that stretch reads WVFYAFGIATFLSLLMAWYSI. The Cytoplasmic portion of the chain corresponds to 254–272; it reads PNNVPTNIHGLSMDWTGSA. A helical membrane pass occupies residues 273–293; that stretch reads LAIIGLILFNFVWNQAPIVGW. At 294 to 295 the chain is on the extracellular side; it reads DK. The chain crosses the membrane as a helical span at residues 296-316; sequence PYIIVLLIISVIFLVAFFVYE. Residues 317-334 lie on the Cytoplasmic side of the membrane; the sequence is SKYAEVPLLPRAMTKNRH. Residues 335–355 traverse the membrane as a helical segment; the sequence is MIMILLAVFLGWGSFGIWTFY. The Extracellular segment spans residues 356–372; the sequence is YVSFQLNLRHYSPVWTG. Residues 373–393 form a helical membrane-spanning segment; sequence GTYFVFVIFGSMAAFFVAFSI. Residues 394 to 398 are Cytoplasmic-facing; the sequence is KRLGP. Residues 399 to 419 traverse the membrane as a helical segment; it reads ALLLCFSLMAFDAGSIMFSVL. Topologically, residues 420 to 429 are extracellular; the sequence is PVEQSYWKLN. A helical membrane pass occupies residues 430–450; sequence FAMQAILCFGMDLSFPASSII. The Cytoplasmic portion of the chain corresponds to 451–461; sequence LSDGLPMQYQG. Residues 462 to 482 form a helical membrane-spanning segment; sequence MAGSLVNTVINYSASLCLGMG. Residues 483-502 lie on the Extracellular side of the membrane; that stretch reads GTVEHQINKSGNDLLKGYRA. The chain crosses the membrane as a helical span at residues 503–523; that stretch reads AVYLGVGLASLGVVISVTYML. Topologically, residues 524 to 540 are cytoplasmic; sequence ENLWNRHRKSEDRSLEA.

It belongs to the major facilitator superfamily.

The protein localises to the membrane. This is an uncharacterized protein from Saccharomyces cerevisiae (strain ATCC 204508 / S288c) (Baker's yeast).